We begin with the raw amino-acid sequence, 157 residues long: Probable succinate transporter subunit YjjB (157 aa).

A run of 4 helical transmembrane segments spans residues 2-22, 55-75, 87-107, and 129-149; these read GIISFIFALAEDMLLAAIPAV, AGFNIEWATFLAALLVGSIGI, IFTVAAVIPMFPGISAYTAMI, and FLKASSIVGALSIGLSIPGLW.

This sequence belongs to the ThrE exporter (TC 2.A.79) family. As to quaternary structure, the transporter is composed of YjjB and YjjP.

It localises to the cell inner membrane. Involved in succinate export with YjjP. Both proteins are required for export. This chain is Probable succinate transporter subunit YjjB, found in Klebsiella pneumoniae (strain 342).